The following is a 249-amino-acid chain: Triosephosphate isomerase (249 aa).

Substrate contacts are provided by Asn-10 and Lys-12. Catalysis depends on His-94, which acts as the Electrophile. Glu-166 serves as the catalytic Proton acceptor.

This sequence belongs to the triosephosphate isomerase family. As to quaternary structure, homodimer.

It carries out the reaction D-glyceraldehyde 3-phosphate = dihydroxyacetone phosphate. It functions in the pathway carbohydrate biosynthesis; gluconeogenesis. It participates in carbohydrate degradation; glycolysis; D-glyceraldehyde 3-phosphate from glycerone phosphate: step 1/1. This Emericella nidulans (strain FGSC A4 / ATCC 38163 / CBS 112.46 / NRRL 194 / M139) (Aspergillus nidulans) protein is Triosephosphate isomerase (tpiA).